Reading from the N-terminus, the 426-residue chain is DNA polymerase processivity factor component A20 (426 aa).

This sequence belongs to the poxviruses A20 family. In terms of assembly, interacts with the DNA polymerase catalytic subunit E9. Interacts with UDG. Component of the Uracil-DNA glycosylase(UDG)-A20-polymerase complex; A20 and UDG form a heterodimeric processivity factor that associates with E9 to form the processive polymerase holoenzyme. Interacts with D5.

Its function is as follows. Plays an essential role in viral DNA replication by acting as the polymerase processivity factor together with protein D4. May serve as a bridge which links the DNA polymerase E9 and the uracil DNA glycosylase. This is DNA polymerase processivity factor component A20 from Vaccinia virus (strain Ankara) (VACV).